A 227-amino-acid polypeptide reads, in one-letter code: Transcriptional regulatory protein TdiR (227 aa).

One can recognise a Response regulatory domain in the interval 11 to 125 (TVFVVDDEAS…DLLDAVNAAL (115 aa)). Aspartate 60 is modified (4-aspartylphosphate). An HTH luxR-type domain is found at 141–206 (HLDLLATLSQ…DLMHFVMRGS (66 aa)). A DNA-binding region (H-T-H motif) is located at residues 165–184 (SKEIAKLLGISYKTVEAHRG).

Post-translationally, phosphorylated by TdiS.

Functionally, member of the two-component regulatory system TdiR/TdiS, which probably regulates transcription of toluene catabolic genes (bss operon). Binds to DNA. The protein is Transcriptional regulatory protein TdiR (tdiR) of Thauera aromatica.